The primary structure comprises 798 residues: Probable DEAD-box ATP-dependent RNA helicase 48 (798 aa).

3 disordered regions span residues 76–100 (KMWG…MSPK), 117–148 (DFWN…NSPI), and 236–257 (FRKN…GKMI). Over residues 132-148 (GSRSGSDSIDSTSNSPI) the composition is skewed to low complexity. A compositionally biased stretch (acidic residues) spans 242–252 (STEEDSDEEGD). A Q motif motif is present at residues 328–356 (KRFDESCISPLTLKALSASGILKMTRVQD). In terms of domain architecture, Helicase ATP-binding spans 359-543 (LSECLDGKDA…QLVLKRDHSY (185 aa)). 372–379 (AKTGTGKS) serves as a coordination point for ATP. The DEAD box signature appears at 491–494 (DEAD). The Helicase C-terminal domain maps to 577-726 (LLKEHINNTP…SIVKHQVDQS (150 aa)).

This sequence belongs to the DEAD box helicase family.

It catalyses the reaction ATP + H2O = ADP + phosphate + H(+). The protein is Probable DEAD-box ATP-dependent RNA helicase 48 (RH48) of Arabidopsis thaliana (Mouse-ear cress).